The following is a 263-amino-acid chain: Endonuclease 8 (263 aa).

Pro-2 functions as the Schiff-base intermediate with DNA in the catalytic mechanism. The Proton donor role is filled by Glu-3. Lys-53 serves as the catalytic Proton donor; for beta-elimination activity. Positions 70, 125, and 169 each coordinate DNA. Residues 229–263 form an FPG-type zinc finger; the sequence is KVFHRDGEACERCGGIIEKTTLSSRPFYWCPHCQK. The Proton donor; for delta-elimination activity role is filled by Arg-253.

The protein belongs to the FPG family. It depends on Zn(2+) as a cofactor.

It catalyses the reaction 2'-deoxyribonucleotide-(2'-deoxyribose 5'-phosphate)-2'-deoxyribonucleotide-DNA = a 3'-end 2'-deoxyribonucleotide-(2,3-dehydro-2,3-deoxyribose 5'-phosphate)-DNA + a 5'-end 5'-phospho-2'-deoxyribonucleoside-DNA + H(+). Its function is as follows. Involved in base excision repair of DNA damaged by oxidation or by mutagenic agents. Acts as a DNA glycosylase that recognizes and removes damaged bases. Has a preference for oxidized pyrimidines, such as thymine glycol, 5,6-dihydrouracil and 5,6-dihydrothymine. Has AP (apurinic/apyrimidinic) lyase activity and introduces nicks in the DNA strand. Cleaves the DNA backbone by beta-delta elimination to generate a single-strand break at the site of the removed base with both 3'- and 5'-phosphates. This is Endonuclease 8 from Salmonella agona (strain SL483).